The chain runs to 395 residues: MPKKKPTPIQLNPNPEGTAVNGTPTAETNLEALQKKLEELELDEQQRKRLEAFLTQKQKVGELKDDDFEKVSELGAGNGGVVFKVSHKPTSLIMARKLIHLEIKPAIRNQIIRELQVLHECNSPYIVGFYGAFYSDGEISICMEHMDGGSLDQVLKKAGKIPEKILGKVSIAVIKGLTYLREKHKIMHRDVKPSNILVNSRGEIKLCDFGVSGQLIDSMANSFVGTRSYMSPERLQGTHYSVQSDIWSMGLSLVEMAIGRYPIPPPDAKELELIFGCSVERDPASSELAPRPRPPGRPISSYGPDSRPPMAIFELLDYIVNEPPPKLPSGVFGAEFQDFVNKCLVKNPAERADLKQLMVHSFIKQSELEEVDFAGWLCSTMGLKQPSTPTHAAGV.

Residues 1–24 are disordered; the sequence is MPKKKPTPIQLNPNPEGTAVNGTP. Over residues 9-24 the composition is skewed to polar residues; that stretch reads IQLNPNPEGTAVNGTP. Residues 68 to 363 enclose the Protein kinase domain; it reads FEKVSELGAG…LKQLMVHSFI (296 aa). Residues 74 to 82 and K97 each bind ATP; that span reads LGAGNGGVV. The active-site Proton acceptor is the D190. Phosphoserine; by RAF occurs at positions 218 and 222. The interval 284-305 is disordered; sequence ASSELAPRPRPPGRPISSYGPD.

This sequence belongs to the protein kinase superfamily. STE Ser/Thr protein kinase family. MAP kinase kinase subfamily. Activated by phosphorylation on Ser/Thr catalyzed by MAP kinase kinase kinases (RAF or MOS). In terms of tissue distribution, expressed in the central nervous system, kidney, liver, intestine and the hematopoietic system.

It localises to the cytoplasm. The protein resides in the cytoskeleton. The protein localises to the microtubule organizing center. It is found in the centrosome. Its subcellular location is the spindle pole body. It localises to the nucleus. It catalyses the reaction L-seryl-[protein] + ATP = O-phospho-L-seryl-[protein] + ADP + H(+). It carries out the reaction L-threonyl-[protein] + ATP = O-phospho-L-threonyl-[protein] + ADP + H(+). The catalysed reaction is L-tyrosyl-[protein] + ATP = O-phospho-L-tyrosyl-[protein] + ADP + H(+). In terms of biological role, dual specificity protein kinase which acts as an essential component of the MAP kinase signal transduction pathway. Binding of extracellular ligands such as growth factors, cytokines and hormones to their cell-surface receptors activates the MAPK/ERK cascade, ultimately leading to phosphorylation of a threonine and a tyrosine residue in a Thr-Glu-Tyr sequence located in MAP kinases. Depending on the cellular context, this pathway mediates diverse biological functions such as cell growth, adhesion, survival and differentiation predominantly through the regulation of transcription, metabolism and cytoskeletal rearrangements. The chain is Dual specificity mitogen-activated protein kinase kinase 1 (map2k1) from Xenopus laevis (African clawed frog).